The chain runs to 311 residues: tRNA-cytidine(32) 2-sulfurtransferase (311 aa).

The PP-loop motif motif lies at 47 to 52; sequence SGGKDS. C122, C125, and C213 together coordinate [4Fe-4S] cluster.

It belongs to the TtcA family. As to quaternary structure, homodimer. It depends on Mg(2+) as a cofactor. The cofactor is [4Fe-4S] cluster.

The protein localises to the cytoplasm. It carries out the reaction cytidine(32) in tRNA + S-sulfanyl-L-cysteinyl-[cysteine desulfurase] + AH2 + ATP = 2-thiocytidine(32) in tRNA + L-cysteinyl-[cysteine desulfurase] + A + AMP + diphosphate + H(+). It functions in the pathway tRNA modification. Catalyzes the ATP-dependent 2-thiolation of cytidine in position 32 of tRNA, to form 2-thiocytidine (s(2)C32). The sulfur atoms are provided by the cysteine/cysteine desulfurase (IscS) system. This Salmonella typhi protein is tRNA-cytidine(32) 2-sulfurtransferase.